A 424-amino-acid chain; its full sequence is Enolase (424 aa).

Position 165 (Gln-165) interacts with (2R)-2-phosphoglycerate. Glu-207 functions as the Proton donor in the catalytic mechanism. Mg(2+) is bound by residues Asp-244, Glu-283, and Asp-310. Positions 335, 364, 365, and 386 each coordinate (2R)-2-phosphoglycerate. The Proton acceptor role is filled by Lys-335.

It belongs to the enolase family. Requires Mg(2+) as cofactor.

The protein resides in the cytoplasm. It is found in the secreted. It localises to the cell surface. The enzyme catalyses (2R)-2-phosphoglycerate = phosphoenolpyruvate + H2O. It functions in the pathway carbohydrate degradation; glycolysis; pyruvate from D-glyceraldehyde 3-phosphate: step 4/5. Catalyzes the reversible conversion of 2-phosphoglycerate (2-PG) into phosphoenolpyruvate (PEP). It is essential for the degradation of carbohydrates via glycolysis. This is Enolase from Chlamydia caviae (strain ATCC VR-813 / DSM 19441 / 03DC25 / GPIC) (Chlamydophila caviae).